The primary structure comprises 140 residues: Transmembrane protein 107 (140 aa).

The next 2 membrane-spanning stretches (helical) occupy residues 7–27 (LVPS…TLFW) and 53–73 (LVAA…GFLS). A glycan (N-linked (GlcNAc...) asparagine) is linked at N79. The next 2 membrane-spanning stretches (helical) occupy residues 83-103 (SLIS…FIFE) and 113-133 (IFVF…VTVF).

In terms of assembly, part of the tectonic-like complex (also named B9 complex). Interacts with TMEM237, TMEM231, MKS1 and TMEM216.

It localises to the membrane. It is found in the cell projection. The protein localises to the cilium. Functionally, plays a role in cilia formation and embryonic patterning. Requires for normal Sonic hedgehog (Shh) signaling in the neural tube and acts in combination with GLI2 and GLI3 to pattern ventral and intermediate neuronal cell types. During ciliogenesis regulates the ciliary transition zone localization of some MKS complex proteins. In Homo sapiens (Human), this protein is Transmembrane protein 107.